Here is an 85-residue protein sequence, read N- to C-terminus: Large ribosomal subunit protein bL27 (85 aa).

The interval 1 to 22 (MAHKKGASSTRNGRDSNAQRLG) is disordered. A compositionally biased stretch (polar residues) spans 7–19 (ASSTRNGRDSNAQ).

Belongs to the bacterial ribosomal protein bL27 family.

This chain is Large ribosomal subunit protein bL27 (rpmA), found in Streptomyces griseus.